The chain runs to 759 residues: DNA replication licensing factor mcm-5 (759 aa).

The region spanning 330 to 536 (AYELIAKSIA…KDATLAKHVI (207 aa)) is the MCM domain. Arg-370 lines the ADP pocket. The Arginine finger signature appears at 511–514 (SRFD).

Belongs to the MCM family. Component of the mcm2-7 complex. The complex forms a toroidal hexameric ring with the proposed subunit order mcm2-mcm6-mcm4-mcm7-mcm3-mcm5 (By simililarity).

It localises to the nucleus. The protein localises to the cytoplasm. Its subcellular location is the cytosol. The enzyme catalyses ATP + H2O = ADP + phosphate + H(+). In terms of biological role, acts as a component of the MCM2-7 complex (MCM complex) which is the replicative helicase essential for 'once per cell cycle' DNA replication initiation and elongation in eukaryotic cells. Core component of CDC45-MCM-GINS (CMG) helicase, the molecular machine that unwinds template DNA during replication, and around which the replisome is built. The active ATPase sites in the MCM2-7 ring are formed through the interaction surfaces of two neighboring subunits such that a critical structure of a conserved arginine finger motif is provided in trans relative to the ATP-binding site of the Walker A box of the adjacent subunit. The six ATPase active sites, however, are likely to contribute differentially to the complex helicase activity. This Caenorhabditis elegans protein is DNA replication licensing factor mcm-5 (mcm-5).